The following is a 310-amino-acid chain: Nitric oxide synthase-interacting protein homolog (310 aa).

The segment covering 115-124 (FSAIESTPSR) has biased composition (polar residues). Residues 115–141 (FSAIESTPSRTGAVATPRPEVGSLKRQ) form a disordered region.

Belongs to the NOSIP family.

It is found in the cytoplasm. The protein resides in the nucleus. Functionally, negatively regulates nitric oxide production by inducing nitric oxide synthase translocation to actin cytoskeleton and inhibiting its enzymatic activity. This Caenorhabditis elegans protein is Nitric oxide synthase-interacting protein homolog.